Reading from the N-terminus, the 640-residue chain is Chaperone protein DnaK (640 aa).

At threonine 198 the chain carries Phosphothreonine; by autocatalysis. Positions 600 to 640 are disordered; sequence KTQGAGAEGSEQPHGEQEAGGAAKGETVVDADFEEVKDDKK. Over residues 628–640 the composition is skewed to acidic residues; sequence VDADFEEVKDDKK.

Belongs to the heat shock protein 70 family.

Functionally, acts as a chaperone. The polypeptide is Chaperone protein DnaK (Geobacter sp. (strain M21)).